The sequence spans 257 residues: Thiazole synthase (257 aa).

Lys-96 functions as the Schiff-base intermediate with DXP in the catalytic mechanism. 1-deoxy-D-xylulose 5-phosphate-binding positions include Gly-157, 184–185, and 206–207; these read AG and NT.

It belongs to the ThiG family. As to quaternary structure, homotetramer. Forms heterodimers with either ThiH or ThiS.

The protein resides in the cytoplasm. The catalysed reaction is [ThiS sulfur-carrier protein]-C-terminal-Gly-aminoethanethioate + 2-iminoacetate + 1-deoxy-D-xylulose 5-phosphate = [ThiS sulfur-carrier protein]-C-terminal Gly-Gly + 2-[(2R,5Z)-2-carboxy-4-methylthiazol-5(2H)-ylidene]ethyl phosphate + 2 H2O + H(+). Its pathway is cofactor biosynthesis; thiamine diphosphate biosynthesis. Functionally, catalyzes the rearrangement of 1-deoxy-D-xylulose 5-phosphate (DXP) to produce the thiazole phosphate moiety of thiamine. Sulfur is provided by the thiocarboxylate moiety of the carrier protein ThiS. In vitro, sulfur can be provided by H(2)S. The polypeptide is Thiazole synthase (Bartonella bacilliformis (strain ATCC 35685 / KC583 / Herrer 020/F12,63)).